The chain runs to 260 residues: 21S rRNA pseudouridine(2819) synthase (260 aa).

Residue Asp-68 is part of the active site.

This sequence belongs to the pseudouridine synthase RluA family.

Its subcellular location is the mitochondrion. The catalysed reaction is uridine(2819) in 21S rRNA = pseudouridine(2819) in 21S rRNA. Functionally, pseudouridylate synthase responsible for the pseudouridine-2819 formation in mitochondrial 21S rRNA. May modulate the efficiency or the fidelity of the mitochondrial translation machinery. This Eremothecium gossypii (strain ATCC 10895 / CBS 109.51 / FGSC 9923 / NRRL Y-1056) (Yeast) protein is 21S rRNA pseudouridine(2819) synthase (PUS5).